Here is a 343-residue protein sequence, read N- to C-terminus: N-acetyl-gamma-glutamyl-phosphate reductase (343 aa).

Residue C147 is part of the active site.

It belongs to the NAGSA dehydrogenase family. Type 1 subfamily.

Its subcellular location is the cytoplasm. The catalysed reaction is N-acetyl-L-glutamate 5-semialdehyde + phosphate + NADP(+) = N-acetyl-L-glutamyl 5-phosphate + NADPH + H(+). It participates in amino-acid biosynthesis; L-arginine biosynthesis; N(2)-acetyl-L-ornithine from L-glutamate: step 3/4. In terms of biological role, catalyzes the NADPH-dependent reduction of N-acetyl-5-glutamyl phosphate to yield N-acetyl-L-glutamate 5-semialdehyde. The chain is N-acetyl-gamma-glutamyl-phosphate reductase from Listeria monocytogenes serotype 4a (strain HCC23).